An 826-amino-acid chain; its full sequence is 1,4-alpha-glucan-branching enzyme 1, chloroplastic/amyloplastic (826 aa).

The N-terminal 58 residues, 1 to 58, are a transit peptide targeting the chloroplast; that stretch reads ATTTTTTHNSKNKQYLAKQKPVELTLGYQNPNGCKVCSFGSKGSIYQKVSSGFKGVSV. Catalysis depends on aspartate 409, which acts as the Nucleophile. The active-site Proton donor is glutamate 464. Residues 782 to 813 are disordered; the sequence is DTDVARIPDVSMESEDSNLDRIEDNSEDAVDA.

It belongs to the glycosyl hydrolase 13 family. GlgB subfamily. As to quaternary structure, monomer. In terms of tissue distribution, expressed in roots, leaves, stipules, pods and flowers.

It localises to the plastid. The protein resides in the chloroplast. The protein localises to the amyloplast. The catalysed reaction is Transfers a segment of a (1-&gt;4)-alpha-D-glucan chain to a primary hydroxy group in a similar glucan chain.. It functions in the pathway glycan biosynthesis; starch biosynthesis. Functionally, catalyzes the formation of the alpha-1,6-glucosidic linkages in starch by scission of a 1,4-alpha-linked oligosaccharide from growing alpha-1,4-glucan chains and the subsequent attachment of the oligosaccharide to the alpha-1,6 position. May preferentially transfer long chains during branching. The protein is 1,4-alpha-glucan-branching enzyme 1, chloroplastic/amyloplastic (SBEII) of Pisum sativum (Garden pea).